The sequence spans 231 residues: MSAAVVATLPTLLLLLGLAAADCPSSSWVQFQSNCYIFLQTTVKIENIEDVRNQCTDSASGADMISIHNEEENAFILETFKKRWKAQDDILLGMFYDTDDESFKWYDKSNMTFNKWKNSEESQDLIDTCGFLQPKSGIWKKGNCEVSSVEGALCKAAVSYEKKYLPDHHILITALVIASTTILTITGAVVWFLYKRNLTSGLTNTAYTTAPQLPYNDDCILVDAEENEYVA.

The first 21 residues, 1–21, serve as a signal peptide directing secretion; the sequence is MSAAVVATLPTLLLLLGLAAA. At 22–169 the chain is on the extracellular side; sequence DCPSSSWVQF…YEKKYLPDHH (148 aa). One can recognise a C-type lectin domain in the interval 31–153; sequence FQSNCYIFLQ…CEVSSVEGAL (123 aa). An N-linked (GlcNAc...) asparagine glycan is attached at Asn110. Cys129 and Cys144 are oxidised to a cystine. The helical transmembrane segment at 170–190 threads the bilayer; it reads ILITALVIASTTILTITGAVV. The Cytoplasmic segment spans residues 191-231; it reads WFLYKRNLTSGLTNTAYTTAPQLPYNDDCILVDAEENEYVA.

The protein localises to the membrane. Its subcellular location is the cell projection. It localises to the filopodium. The protein resides in the cytoplasm. It is found in the cell cortex. The protein localises to the microvillus. In terms of biological role, potential multifunctional C-type lectin receptor that may play roles in endocytosis and phagocytosis as well as in cell adhesion and migration. The polypeptide is CD302 antigen (Trichosurus vulpecula (Brush-tailed possum)).